A 106-amino-acid chain; its full sequence is Replication restart protein PriB (106 aa).

One can recognise an SSB domain in the interval 4–103 (MNRLVLSGTV…LHAEQIELID (100 aa)).

Belongs to the PriB family. In terms of assembly, homodimer. Interacts with PriA and DnaT. Component of the replication restart primosome. Primosome assembly occurs via a 'hand-off' mechanism. PriA binds to replication forks, subsequently PriB then DnaT bind; DnaT then displaces ssDNA to generate the helicase loading substrate.

Involved in the restart of stalled replication forks, which reloads the replicative helicase on sites other than the origin of replication; the PriA-PriB pathway is the major replication restart pathway. During primosome assembly it facilitates complex formation between PriA and DnaT on DNA; stabilizes PriA on DNA. Stimulates the DNA unwinding activity of PriA helicase. The polypeptide is Replication restart protein PriB (Pectobacterium atrosepticum (strain SCRI 1043 / ATCC BAA-672) (Erwinia carotovora subsp. atroseptica)).